A 299-amino-acid chain; its full sequence is dTDP-4-dehydrorhamnose reductase (299 aa).

NADH is bound by residues glycine 10 to valine 12, aspartate 30, aspartate 39 to phenylalanine 40, and alanine 63 to threonine 65. Residue glutamine 11–valine 12 coordinates NADPH. NADPH is bound by residues aspartate 39–phenylalanine 40, alanine 63–threonine 65, and tyrosine 102. DTDP-beta-L-rhamnose is bound at residue threonine 104–aspartate 105. NADH contacts are provided by tyrosine 128 and lysine 132. Residues tyrosine 128 and lysine 132 each coordinate NADPH. Residue tyrosine 128 is the Proton donor/acceptor of the active site. Tryptophan 153 lines the dTDP-beta-L-rhamnose pocket.

The protein belongs to the dTDP-4-dehydrorhamnose reductase family. Homodimer. Mg(2+) is required as a cofactor.

It carries out the reaction dTDP-beta-L-rhamnose + NADP(+) = dTDP-4-dehydro-beta-L-rhamnose + NADPH + H(+). Its pathway is carbohydrate biosynthesis; dTDP-L-rhamnose biosynthesis. The protein operates within bacterial outer membrane biogenesis; LPS O-antigen biosynthesis. Its function is as follows. Involved in the biosynthesis of the dTDP-L-rhamnose which is an important component of lipopolysaccharide (LPS). Catalyzes the reduction of dTDP-6-deoxy-L-lyxo-4-hexulose to yield dTDP-L-rhamnose. RmlD uses NADH and NADPH nearly equally well. This Salmonella typhimurium (strain LT2 / SGSC1412 / ATCC 700720) protein is dTDP-4-dehydrorhamnose reductase (rfbD).